Consider the following 569-residue polypeptide: Urease subunit alpha (569 aa).

A Urease domain is found at glycine 131–leucine 569. Ni(2+) is bound by residues histidine 136, histidine 138, and lysine 219. Residue lysine 219 is modified to N6-carboxylysine. Histidine 221 serves as a coordination point for substrate. Residues histidine 248 and histidine 274 each coordinate Ni(2+). Residue histidine 322 is the Proton donor of the active site. Ni(2+) is bound at residue aspartate 362.

The protein belongs to the metallo-dependent hydrolases superfamily. Urease alpha subunit family. In terms of assembly, heterotrimer of UreA (gamma), UreB (beta) and UreC (alpha) subunits. Three heterotrimers associate to form the active enzyme. Requires Ni cation as cofactor. In terms of processing, carboxylation allows a single lysine to coordinate two nickel ions.

The protein resides in the cytoplasm. The enzyme catalyses urea + 2 H2O + H(+) = hydrogencarbonate + 2 NH4(+). Its pathway is nitrogen metabolism; urea degradation; CO(2) and NH(3) from urea (urease route): step 1/1. This is Urease subunit alpha from Prochlorococcus marinus (strain AS9601).